A 248-amino-acid chain; its full sequence is Triosephosphate isomerase (248 aa).

Asn-11 and Lys-13 together coordinate substrate. The Electrophile role is filled by His-95. The active-site Proton acceptor is Glu-165.

Belongs to the triosephosphate isomerase family. As to quaternary structure, homodimer.

It is found in the cytoplasm. It catalyses the reaction dihydroxyacetone phosphate = methylglyoxal + phosphate. The enzyme catalyses D-glyceraldehyde 3-phosphate = dihydroxyacetone phosphate. It functions in the pathway carbohydrate degradation; glycolysis; D-glyceraldehyde 3-phosphate from glycerone phosphate: step 1/1. It participates in carbohydrate biosynthesis; gluconeogenesis. Its function is as follows. Triosephosphate isomerase is an extremely efficient metabolic enzyme that catalyzes the interconversion between dihydroxyacetone phosphate (DHAP) and D-glyceraldehyde-3-phosphate (G3P) in glycolysis and gluconeogenesis. It is also responsible for the non-negligible production of methylglyoxal a reactive cytotoxic side-product that modifies and can alter proteins, DNA and lipids. This Xenopus tropicalis (Western clawed frog) protein is Triosephosphate isomerase (tpi1).